We begin with the raw amino-acid sequence, 434 residues long: D-amino acid dehydrogenase (434 aa).

3 to 17 is an FAD binding site; the sequence is VVILGSGVVGVTSAW.

Belongs to the DadA oxidoreductase family. It depends on FAD as a cofactor.

The catalysed reaction is a D-alpha-amino acid + A + H2O = a 2-oxocarboxylate + AH2 + NH4(+). The protein operates within amino-acid degradation; D-alanine degradation; NH(3) and pyruvate from D-alanine: step 1/1. Oxidative deamination of D-amino acids. The polypeptide is D-amino acid dehydrogenase (Yersinia pseudotuberculosis serotype O:3 (strain YPIII)).